The primary structure comprises 811 residues: Transmembrane protease serine 6 (811 aa).

A disordered region spans residues methionine 1–lysine 48. Topologically, residues methionine 1–proline 59 are cytoplasmic. Positions proline 8–valine 18 are enriched in polar residues. The helical; Signal-anchor for type II membrane protein transmembrane segment at leucine 60–tyrosine 80 threads the bilayer. The Extracellular portion of the chain corresponds to lysine 81–threonine 811. Positions valine 86–valine 209 constitute an SEA domain. N-linked (GlcNAc...) asparagine glycosylation is found at asparagine 138, asparagine 184, asparagine 216, asparagine 338, asparagine 433, and asparagine 453. CUB domains follow at residues valine 213–glutamine 336 and phenylalanine 323–leucine 440. Cysteine 335 and cysteine 366 form a disulfide bridge. 3 LDL-receptor class A domains span residues valine 445–isoleucine 477, lysine 478–proline 514, and asparagine 518–serine 555. Cystine bridges form between cysteine 458-cysteine 470, cysteine 464-cysteine 480, cysteine 474-cysteine 489, cysteine 491-cysteine 503, cysteine 497-cysteine 516, cysteine 510-cysteine 525, cysteine 531-cysteine 543, cysteine 538-cysteine 557, cysteine 551-cysteine 566, and cysteine 602-cysteine 618. N-linked (GlcNAc...) asparagine glycosylation is present at asparagine 518. The Peptidase S1 domain maps to isoleucine 577–threonine 811. Active-site charge relay system residues include histidine 617 and aspartate 668. 3 cysteine pairs are disulfide-bonded: cysteine 702/cysteine 768, cysteine 733/cysteine 747, and cysteine 758/cysteine 787. Residue serine 762 is the Charge relay system of the active site.

It belongs to the peptidase S1 family. In terms of assembly, interacts with HJV. In terms of processing, the single-chain zymogen undergoes autoproteolytic processing. This results in TMPRSS6 shedding from the cell surface and conversion into an activated two-chains form which is released extracellularly. The process involves a trans-activation mechanism that requires TMPRSS6 oligomerization. In terms of tissue distribution, expressed at highest levels in adult mice liver, kidney and uterus. Also strongly expressed within the nasal cavity by olfactory epithelial cells. A weak, but detectable, signal in adult mice tissues analyzed including brain, lung, heart, kidney, spleen, muscle, intestine, thymus and pancreas. No signal in residual embryonic yolk sac, developing kidney tubules or in embryonic tissues analyzed including lung, heart, gastrointestinal tract and epithelium of the oral cavity.

It is found in the cell membrane. Its function is as follows. Membrane-bound serine protease. Through the cleavage of cell surface HJV, a regulator of the expression of the iron absorption-regulating hormone hepicidin/HAMP, plays a role in iron homeostasis. In Mus musculus (Mouse), this protein is Transmembrane protease serine 6 (Tmprss6).